A 766-amino-acid chain; its full sequence is General transcription and DNA repair factor IIH helicase/translocase subunit XPB2 (766 aa).

The interval 1–56 (MGNDERKRPTKKMKYGGKDDQKMKNIQNVEDYYDDADEDSRDGEGEEKRRDFTDLE) is disordered. The span at 31 to 41 (DYYDDADEDSR) shows a compositional bias: acidic residues. Residues 42–56 (DGEGEEKRRDFTDLE) show a composition bias toward basic and acidic residues. A Helicase ATP-binding domain is found at 293-455 (MFGNGRARSG…DLNFLIGPKL (163 aa)). ATP is bound at residue 306–313 (LPCGAGKS). The short motif at 408-411 (DEVH) is the DEVH box element. The 167-residue stretch at 510–676 (RACEFLIRFH…SLPPPDAGSS (167 aa)) folds into the Helicase C-terminal domain. Positions 739-748 (SGRQKSGNQS) are enriched in polar residues. A disordered region spans residues 739–766 (SGRQKSGNQSKKPKDPTKRHNIFKKRYV). Residues 749-765 (KKPKDPTKRHNIFKKRY) carry the Nuclear localization signal motif. Positions 757-766 (RHNIFKKRYV) are enriched in basic residues.

It belongs to the helicase family. RAD25/XPB subfamily. Component of the 7-subunit TFIIH core complex composed of XPB, XPD, TFB1/GTF2H1, GTF2H2/P44, TFB4/GTF2H3, TFB2/GTF2H4 and TFB5/GTF2H5, which is active in NER. The core complex associates with the 3-subunit CDK-activating kinase (CAK) module composed of CYCH1/cyclin H1, CDKD and MAT1/At4g30820 to form the 10-subunit holoenzyme (holo-TFIIH) active in transcription. Expressed ubiquitously.

The protein localises to the nucleus. The catalysed reaction is Couples ATP hydrolysis with the unwinding of duplex DNA by translocating in the 3'-5' direction.. The enzyme catalyses ATP + H2O = ADP + phosphate + H(+). ATP-dependent 3'-5' DNA helicase/translocase; binds dsDNA rather than ssDNA, unzipping it in a translocase rather than classical helicase activity. Component of the general transcription and DNA repair factor IIH (TFIIH) core complex. When complexed to CDK-activating kinase (CAK), involved in RNA transcription by RNA polymerase II. The ATPase activity of XPB/ERCC3, but not its helicase activity, is required for DNA opening; it may wrap around the damaged DNA wedging it open, causing localized melting and twisting that allows XPD/ERCC2 helicase to anchor. The ATP-dependent helicase activity of XPB/ERCC3 may be required for promoter escape. Also involved in transcription-coupled nucleotide excision repair (NER) of damaged DNA. In NER, TFIIH acts by opening DNA around the lesion to allow the excision of the damaged oligonucleotide and its replacement by a new DNA fragment. The structure of the TFIIH transcription complex differs from the NER-TFIIH complex. Partially complements UV sensitivity of a yeast SSL2 mutation. The protein is General transcription and DNA repair factor IIH helicase/translocase subunit XPB2 (XPB2) of Arabidopsis thaliana (Mouse-ear cress).